Reading from the N-terminus, the 190-residue chain is dCTP deaminase, dUMP-forming (190 aa).

DCTP contacts are provided by residues 101–106, Asp119, 127–129, Gln148, Tyr162, and Gln174; these read KSSLGR and TLE. The active-site Proton donor/acceptor is the Glu129. A disordered region spans residues 161–190; sequence PYGSSGVGSKYQGQRGPTPSRSYQNFIRST. Over residues 171–190 the composition is skewed to polar residues; the sequence is YQGQRGPTPSRSYQNFIRST.

Belongs to the dCTP deaminase family. Homotrimer.

It catalyses the reaction dCTP + 2 H2O = dUMP + NH4(+) + diphosphate. Its pathway is pyrimidine metabolism; dUMP biosynthesis; dUMP from dCTP: step 1/1. Functionally, bifunctional enzyme that catalyzes both the deamination of dCTP to dUTP and the hydrolysis of dUTP to dUMP without releasing the toxic dUTP intermediate. This chain is dCTP deaminase, dUMP-forming, found in Mycobacterium marinum (strain ATCC BAA-535 / M).